A 188-amino-acid chain; its full sequence is Adenine phosphoribosyltransferase (188 aa).

It belongs to the purine/pyrimidine phosphoribosyltransferase family. In terms of assembly, homodimer.

Its subcellular location is the cytoplasm. It carries out the reaction AMP + diphosphate = 5-phospho-alpha-D-ribose 1-diphosphate + adenine. The protein operates within purine metabolism; AMP biosynthesis via salvage pathway; AMP from adenine: step 1/1. Catalyzes a salvage reaction resulting in the formation of AMP, that is energically less costly than de novo synthesis. The protein is Adenine phosphoribosyltransferase of Frankia casuarinae (strain DSM 45818 / CECT 9043 / HFP020203 / CcI3).